We begin with the raw amino-acid sequence, 409 residues long: Lipoyl synthase, mitochondrial (409 aa).

Residues 21-41 form a disordered region; that stretch reads QQQVPPSEEPRNESGAANPPL. [4Fe-4S] cluster-binding residues include Cys-125, Cys-130, Cys-136, Cys-159, Cys-163, Cys-166, and Ser-375. Positions 142 to 364 constitute a Radical SAM core domain; that stretch reads EEGDGTATAT…EKEALDMGFL (223 aa).

The protein belongs to the radical SAM superfamily. Lipoyl synthase family. [4Fe-4S] cluster is required as a cofactor.

Its subcellular location is the mitochondrion. It catalyses the reaction [[Fe-S] cluster scaffold protein carrying a second [4Fe-4S](2+) cluster] + N(6)-octanoyl-L-lysyl-[protein] + 2 oxidized [2Fe-2S]-[ferredoxin] + 2 S-adenosyl-L-methionine + 4 H(+) = [[Fe-S] cluster scaffold protein] + N(6)-[(R)-dihydrolipoyl]-L-lysyl-[protein] + 4 Fe(3+) + 2 hydrogen sulfide + 2 5'-deoxyadenosine + 2 L-methionine + 2 reduced [2Fe-2S]-[ferredoxin]. It functions in the pathway protein modification; protein lipoylation via endogenous pathway; protein N(6)-(lipoyl)lysine from octanoyl-[acyl-carrier-protein]: step 2/2. Its function is as follows. Catalyzes the radical-mediated insertion of two sulfur atoms into the C-6 and C-8 positions of the octanoyl moiety bound to the lipoyl domains of lipoate-dependent enzymes, thereby converting the octanoylated domains into lipoylated derivatives. This chain is Lipoyl synthase, mitochondrial, found in Trypanosoma brucei gambiense (strain MHOM/CI/86/DAL972).